The primary structure comprises 340 residues: Glyceraldehyde-3-phosphate dehydrogenase (340 aa).

Residues 11-12 (SI) and Gly-111 each bind NAD(+). Residue 140-142 (SCN) coordinates D-glyceraldehyde 3-phosphate. Cys-141 serves as the catalytic Nucleophile. An NAD(+)-binding site is contributed by Arg-169. Residue 195–196 (HG) coordinates D-glyceraldehyde 3-phosphate. Gln-303 is a binding site for NAD(+).

This sequence belongs to the glyceraldehyde-3-phosphate dehydrogenase family. In terms of assembly, homotetramer.

It is found in the cytoplasm. The enzyme catalyses D-glyceraldehyde 3-phosphate + phosphate + NADP(+) = (2R)-3-phospho-glyceroyl phosphate + NADPH + H(+). The catalysed reaction is D-glyceraldehyde 3-phosphate + phosphate + NAD(+) = (2R)-3-phospho-glyceroyl phosphate + NADH + H(+). Its pathway is carbohydrate degradation; glycolysis; pyruvate from D-glyceraldehyde 3-phosphate: step 1/5. This is Glyceraldehyde-3-phosphate dehydrogenase from Methanococcus maripaludis (strain C7 / ATCC BAA-1331).